The chain runs to 159 residues: Capsid protein (159 aa).

N-acetylserine; by host is present on S2.

It belongs to the virgaviridae capsid protein family.

The protein resides in the virion. Functionally, capsid protein self-assembles to form rod-shaped virions about 18 nm in diameter with a central canal enclosing the viral genomic RNA. This Tobacco mosaic virus (strain 06) (TMV-06) protein is Capsid protein (CP).